A 146-amino-acid chain; its full sequence is Leghemoglobin Lb120-29 (146 aa).

A Globin domain is found at 2 to 146 (GFTDKQEALV…LASAIKKAMS (145 aa)). Nitrated tyrosine occurs at positions 24 and 29. Residue serine 44 coordinates heme b. The residue at position 44 (serine 44) is a Phosphoserine. Histidine 61 provides a ligand contact to O2. Residues lysine 64, histidine 93, and lysine 96 each contribute to the heme b site. The residue at position 134 (tyrosine 134) is a Nitrated tyrosine.

The protein belongs to the plant globin family. As to quaternary structure, monomer. Nitrated in effective nodules and particularly in hypoxic conditions; this mechanism may play a protective role in the symbiosis by buffering toxic peroxynitrite NO(2)(-). Nitration level decrease during nodule senescence. In terms of processing, phosphorylation at Ser-44 disrupts the molecular environment of its porphyrin ring oxygen binding pocket, thus leading to a reduced oxygen consumption and to the delivery of oxygen O(2) to symbiosomes. In terms of tissue distribution, root nodules.

It localises to the cytoplasm. The protein resides in the cytosol. The protein localises to the nucleus. In terms of biological role, leghemoglobin that reversibly binds oxygen O(2) through a pentacoordinated heme iron. In root nodules, facilitates the diffusion of oxygen to the bacteroids while preventing the bacterial nitrogenase from being inactivated by buffering dioxygen, nitric oxide and carbon monoxide, and promoting the formation of reactive oxygen species (ROS, e.g. H(2)O(2)). This role is essential for symbiotic nitrogen fixation (SNF). The protein is Leghemoglobin Lb120-29 of Pisum sativum (Garden pea).